Here is a 134-residue protein sequence, read N- to C-terminus: Ribosome-binding factor A (134 aa).

This sequence belongs to the RbfA family. As to quaternary structure, monomer. Binds 30S ribosomal subunits, but not 50S ribosomal subunits or 70S ribosomes.

The protein localises to the cytoplasm. One of several proteins that assist in the late maturation steps of the functional core of the 30S ribosomal subunit. Associates with free 30S ribosomal subunits (but not with 30S subunits that are part of 70S ribosomes or polysomes). Required for efficient processing of 16S rRNA. May interact with the 5'-terminal helix region of 16S rRNA. In Synechococcus sp. (strain CC9311), this protein is Ribosome-binding factor A.